Reading from the N-terminus, the 144-residue chain is Large ribosomal subunit protein uL13 (144 aa).

This sequence belongs to the universal ribosomal protein uL13 family. In terms of assembly, part of the 50S ribosomal subunit.

In terms of biological role, this protein is one of the early assembly proteins of the 50S ribosomal subunit, although it is not seen to bind rRNA by itself. It is important during the early stages of 50S assembly. The protein is Large ribosomal subunit protein uL13 of Buchnera aphidicola subsp. Baizongia pistaciae (strain Bp).